A 173-amino-acid polypeptide reads, in one-letter code: Shikimate kinase (173 aa).

An ATP-binding site is contributed by 14–19; the sequence is GAGKST. Mg(2+) is bound at residue S18. 3 residues coordinate substrate: D36, R60, and G82. R120 provides a ligand contact to ATP. R140 serves as a coordination point for substrate. Residue Q157 participates in ATP binding.

The protein belongs to the shikimate kinase family. Monomer. It depends on Mg(2+) as a cofactor.

Its subcellular location is the cytoplasm. It carries out the reaction shikimate + ATP = 3-phosphoshikimate + ADP + H(+). Its pathway is metabolic intermediate biosynthesis; chorismate biosynthesis; chorismate from D-erythrose 4-phosphate and phosphoenolpyruvate: step 5/7. In terms of biological role, catalyzes the specific phosphorylation of the 3-hydroxyl group of shikimic acid using ATP as a cosubstrate. This chain is Shikimate kinase, found in Buchnera aphidicola subsp. Acyrthosiphon pisum (strain APS) (Acyrthosiphon pisum symbiotic bacterium).